A 1204-amino-acid chain; its full sequence is Probable cation-transporting ATPase 13A4 (1204 aa).

Over 1–32 (MGENPAKSHYAQLNLGEENEMEIFGYKTQCCR) the chain is Cytoplasmic. A helical membrane pass occupies residues 33-53 (KALCIAGYILSCGALLLLFYW). Residues 54 to 219 (KPEWDVWANC…FSVCLWFAED (166 aa)) lie on the Extracellular side of the membrane. A helical membrane pass occupies residues 220-242 (YMEYAAAIIIMSPLSISLTVYDL). Topologically, residues 243-397 (RQQSVKLQRL…NFRLYRDALR (155 aa)) are cytoplasmic. Residues 398–418 (FLMCLIAFAAIGMIYTVCVFA) form a helical membrane-spanning segment. Residues 419 to 433 (LNGEEAGEVVKKALD) are Extracellular-facing. A helical membrane pass occupies residues 434–454 (VITIAVPPALPAALTTGIIYT). The Cytoplasmic portion of the chain corresponds to 455–897 (QRRLKKKGIF…REGRAALVTS (443 aa)). Asp-483 serves as the catalytic 4-aspartylphosphate intermediate. Mg(2+) contacts are provided by Asp-845 and Asp-849. A helical transmembrane segment spans residues 898 to 918 (FCMFKYMALYSTIQYLGVLLL). The Extracellular portion of the chain corresponds to 919–929 (YWQLNSFGNYQ). A helical transmembrane segment spans residues 930-950 (FLFQDLAITTVIGMTMSFTEA). Residues 951-967 (YPKLVPYRPPSQLVSPP) are Cytoplasmic-facing. The chain crosses the membrane as a helical span at residues 968 to 988 (LLLSVILNILFSLGMQILGFL). At 989-1043 (MVQKQPWYSKTDIHSACLSVNNHVENSSSASSLGLHGVGGGDPTEVDNGYKSYEN) the chain is on the extracellular side. A helical transmembrane segment spans residues 1044–1064 (TTVWLLSTINCLIIALVFSKG). Topologically, residues 1065 to 1075 (KPFRQPIYTNY) are cytoplasmic. The helical transmembrane segment at 1076-1096 (VFIMVLVGQLGVCLFLVFADI) threads the bilayer. The Extracellular segment spans residues 1097–1113 (DDLYSKMDLVCTPTTWR). Residues 1114 to 1134 (ISMVMMLAVTLAVSFLVEEAI) form a helical membrane-spanning segment. Topologically, residues 1135–1204 (IENRALWLWL…PTFDSNEDAL (70 aa)) are cytoplasmic.

It belongs to the cation transport ATPase (P-type) (TC 3.A.3) family. Type V subfamily.

It localises to the membrane. It catalyses the reaction ATP + H2O = ADP + phosphate + H(+). This is Probable cation-transporting ATPase 13A4 (ATP13A4) from Gallus gallus (Chicken).